A 238-amino-acid polypeptide reads, in one-letter code: Probable transcriptional regulatory protein SERP0322 (238 aa).

It belongs to the TACO1 family. YeeN subfamily.

The protein localises to the cytoplasm. The polypeptide is Probable transcriptional regulatory protein SERP0322 (Staphylococcus epidermidis (strain ATCC 35984 / DSM 28319 / BCRC 17069 / CCUG 31568 / BM 3577 / RP62A)).